Reading from the N-terminus, the 92-residue chain is RIIa domain-containing protein 1 (92 aa).

The region spanning lysine 43–leucine 77 is the RIIa domain.

This Bos taurus (Bovine) protein is RIIa domain-containing protein 1 (RIIAD1).